We begin with the raw amino-acid sequence, 353 residues long: uncharacterized protein (353 aa).

A signal peptide spans 1 to 24 (MRVVERAVIACYLGITIFSGIAFG).

This sequence belongs to the chlamydial CPn_1058/CT_355/TC_0634 family.

This is an uncharacterized protein from Chlamydia trachomatis serovar D (strain ATCC VR-885 / DSM 19411 / UW-3/Cx).